Reading from the N-terminus, the 1553-residue chain is Probable serine/threonine-protein kinase qkgA (1553 aa).

A disordered region spans residues 113-142 (SSSSSSSSTSSSPSLTSSPSSPISTSPPYH). LRR repeat units follow at residues 287–309 (NGTF…INMC), 311–333 (QLVE…TELK), 334–356 (FLKN…CNLT), and 357–378 (LLKV…IVEL). Residues 395 to 619 (SCETWNKVKL…KRLIHESEKS (225 aa)) enclose the Roc domain. Disordered regions lie at residues 643–696 (NQGR…QQQQ), 955–1019 (ISNS…PSSQ), and 1048–1090 (NQNG…NNNK). Composition is skewed to low complexity over residues 648-675 (SISN…TSKK), 683-696 (SQQQ…QQQQ), 956-1018 (SNST…SPSS), and 1059-1090 (TTTT…NNNK). Residues 694-893 (QQQLQQSIKE…KTYWKDGVLL (200 aa)) form the COR domain. The Protein kinase domain occupies 1242–1546 (ILYERQIGEG…QTSYFDSPFL (305 aa)). ATP contacts are provided by residues 1248–1256 (IGEGGFGLI) and K1271. The active-site Proton acceptor is the D1393.

It belongs to the protein kinase superfamily. TKL Ser/Thr protein kinase family. ROCO subfamily.

It carries out the reaction L-seryl-[protein] + ATP = O-phospho-L-seryl-[protein] + ADP + H(+). It catalyses the reaction L-threonyl-[protein] + ATP = O-phospho-L-threonyl-[protein] + ADP + H(+). In terms of biological role, involved in growth, and during development, in aggregation. In Dictyostelium discoideum (Social amoeba), this protein is Probable serine/threonine-protein kinase qkgA (qkgA-1).